Here is a 165-residue protein sequence, read N- to C-terminus: Hydroxyproline-rich systemin A (165 aa).

The N-terminal stretch at 1-18 is a signal peptide; the sequence is MRVLFLIYLILSPFGAEA. Residues 19-35 constitute a propeptide that is removed on maturation; it reads RTLLENHEGLNVGSGYG. Disordered regions lie at residues 33 to 70 and 142 to 165; these read GYGRGANLPPPSPASSPPSKEVSNSVSPTRTDEKTSEN and YWNRKPLSPPSPKPADGQRPLHSY. 5 positions are modified to 4-hydroxyproline: Pro42, Pro43, Pro45, Pro49, and Pro50. Pro42, Pro43, Pro45, Pro49, and Pro50 each carry an O-linked (Ara...) hydroxyproline glycan. A propeptide spanning residues 54-143 is cleaved from the precursor; that stretch reads VSNSVSPTRT…FDSKSDERYW (90 aa). 4-hydroxyproline occurs at positions 150, 151, and 153. Residues Pro150, Pro151, and Pro153 are each glycosylated (O-linked (Ara...) hydroxyproline). Positions 162-165 are excised as a propeptide; that stretch reads LHSY.

In terms of processing, O-glycosylated; contains pentose side chains. In terms of tissue distribution, expressed in leaves.

The protein resides in the secreted. Functionally, activates a lipid-based signal transduction pathway in which linolenic acid is converted to jasmonic acid, a potent activator of defense gene transcription, including proteinase inhibitors. The polypeptide is Hydroxyproline-rich systemin A (Nicotiana tabacum (Common tobacco)).